A 419-amino-acid polypeptide reads, in one-letter code: Tyrosine--tRNA ligase (419 aa).

Tyr-42 lines the L-tyrosine pocket. A 'HIGH' region motif is present at residues Ala-47 to Ser-56. 2 residues coordinate L-tyrosine: Tyr-179 and Gln-183. A 'KMSKS' region motif is present at residues Lys-239–Thr-243. ATP is bound at residue Lys-242. Residues Val-353–Pro-418 enclose the S4 RNA-binding domain.

This sequence belongs to the class-I aminoacyl-tRNA synthetase family. TyrS type 1 subfamily. As to quaternary structure, homodimer.

It is found in the cytoplasm. It carries out the reaction tRNA(Tyr) + L-tyrosine + ATP = L-tyrosyl-tRNA(Tyr) + AMP + diphosphate + H(+). Its function is as follows. Catalyzes the attachment of tyrosine to tRNA(Tyr) in a two-step reaction: tyrosine is first activated by ATP to form Tyr-AMP and then transferred to the acceptor end of tRNA(Tyr). The sequence is that of Tyrosine--tRNA ligase from Caulobacter vibrioides (strain ATCC 19089 / CIP 103742 / CB 15) (Caulobacter crescentus).